A 157-amino-acid chain; its full sequence is Protein EOLA1 (157 aa).

One can recognise an ASCH domain in the interval 6 to 92 (LSFRQPYAGL…IAGLIDIGET (87 aa)).

Belongs to the EOLA family. In terms of assembly, interacts with MT2A.

May play a role in cell protection during the inflammatory response. In epithelial cells, negatively regulates IL6 production and apoptosis through the regulation of MT2A expression. The polypeptide is Protein EOLA1 (Mus musculus (Mouse)).